The primary structure comprises 186 residues: Casparian strip membrane protein 3 (186 aa).

At 1–26 (MKAGALELGEGSKTSIPRGGVNRGIS) the chain is on the cytoplasmic side. Residues 27–47 (ILDFILRLITIIGTLGSAIAM) traverse the membrane as a helical segment. Topologically, residues 48 to 74 (GTTNETLPFFTQFTQFRAEYDDLPTFT) are extracellular. Asparagine 51 carries an N-linked (GlcNAc...) asparagine glycan. The chain crosses the membrane as a helical span at residues 75–95 (FFVIANSIVSGYLVLSLPMSI). The Cytoplasmic segment spans residues 96-107 (LHIVRSGARASR). Residues 108–128 (IVLIFFDTAMLALLTAAASAA) form a helical membrane-spanning segment. The Extracellular segment spans residues 129-161 (SAIVYLAHKGNAQANWFAICQQFKSFCERISGS). A helical transmembrane segment spans residues 162–182 (LIGSFGGIILFILLVLLSAVA). At 183 to 186 (LSRC) the chain is on the cytoplasmic side.

The protein belongs to the Casparian strip membrane proteins (CASP) family. In terms of assembly, homodimer and heterodimers.

It localises to the cell membrane. Regulates membrane-cell wall junctions and localized cell wall deposition. Required for establishment of the Casparian strip membrane domain (CSD) and the subsequent formation of Casparian strips, a cell wall modification of the root endodermis that determines an apoplastic barrier between the intraorganismal apoplasm and the extraorganismal apoplasm and prevents lateral diffusion. This Vitis vinifera (Grape) protein is Casparian strip membrane protein 3.